The sequence spans 129 residues: Small ribosomal subunit protein uS11 (129 aa).

The protein belongs to the universal ribosomal protein uS11 family. In terms of assembly, part of the 30S ribosomal subunit. Interacts with proteins S7 and S18. Binds to IF-3.

Located on the platform of the 30S subunit, it bridges several disparate RNA helices of the 16S rRNA. Forms part of the Shine-Dalgarno cleft in the 70S ribosome. In Baumannia cicadellinicola subsp. Homalodisca coagulata, this protein is Small ribosomal subunit protein uS11.